Here is a 305-residue protein sequence, read N- to C-terminus: Probable 5-dehydro-4-deoxyglucarate dehydratase (305 aa).

The protein belongs to the DapA family.

The catalysed reaction is 5-dehydro-4-deoxy-D-glucarate + H(+) = 2,5-dioxopentanoate + CO2 + H2O. It functions in the pathway carbohydrate acid metabolism; D-glucarate degradation; 2,5-dioxopentanoate from D-glucarate: step 2/2. In Xanthomonas campestris pv. campestris (strain 8004), this protein is Probable 5-dehydro-4-deoxyglucarate dehydratase.